The primary structure comprises 210 residues: Large ribosomal subunit protein uL3 (210 aa).

Residues 131-165 are disordered; that stretch reads GPMSHGSKYHRRVGSMGATTDPGRTFKGKKMPGRM.

It belongs to the universal ribosomal protein uL3 family. In terms of assembly, part of the 50S ribosomal subunit. Forms a cluster with proteins L14 and L19.

Its function is as follows. One of the primary rRNA binding proteins, it binds directly near the 3'-end of the 23S rRNA, where it nucleates assembly of the 50S subunit. This chain is Large ribosomal subunit protein uL3, found in Caldanaerobacter subterraneus subsp. tengcongensis (strain DSM 15242 / JCM 11007 / NBRC 100824 / MB4) (Thermoanaerobacter tengcongensis).